The chain runs to 953 residues: 2-oxoglutarate dehydrogenase E1 component (953 aa).

The protein belongs to the alpha-ketoglutarate dehydrogenase family. Homodimer. Part of the 2-oxoglutarate dehydrogenase (OGDH) complex composed of E1 (2-oxoglutarate dehydrogenase), E2 (dihydrolipoamide succinyltransferase) and E3 (dihydrolipoamide dehydrogenase); the complex contains multiple copies of the three enzymatic components (E1, E2 and E3). The cofactor is thiamine diphosphate.

The catalysed reaction is N(6)-[(R)-lipoyl]-L-lysyl-[protein] + 2-oxoglutarate + H(+) = N(6)-[(R)-S(8)-succinyldihydrolipoyl]-L-lysyl-[protein] + CO2. In terms of biological role, E1 component of the 2-oxoglutarate dehydrogenase (OGDH) complex which catalyzes the decarboxylation of 2-oxoglutarate, the first step in the conversion of 2-oxoglutarate to succinyl-CoA and CO(2). This Oceanobacillus iheyensis (strain DSM 14371 / CIP 107618 / JCM 11309 / KCTC 3954 / HTE831) protein is 2-oxoglutarate dehydrogenase E1 component.